The sequence spans 810 residues: MPMDLILVVWFCVCTARTVVGFGMDPDLQMDIVTELDLVNTTLGVAQVSGMHNASKAFLFQDIEREIHAAPHVSEKLIQLFRNKSEFTILATVQQKPSTSGVILSIRELEHSYFELESSGLRDEIRYHYIHNGKPRTEALPYRMADGQWHKVALSVSASHLLLHVDCNRIYERVIDPPDTNLPPGINLWLGQRNQKHGLFKGIIQDGKIIFMPNGYITQCPNLNHTCPTCSDFLSLVQGIMDLQELLAKMTAKLNYAETRLSQLENCHCEKTCQVSGLLYRDQDSWVDGDHCRNCTCKSGAVECRRMSCPPLNCSPDSLPVHIAGQCCKVCRPKCIYGGKVLAEGQRILTKSCRECRGGVLVKITEMCPPLNCSEKDHILPENQCCRVCRGHNFCAEGPKCGENSECKNWNTKATCECKSGYISVQGDSAYCEDIDECAAKMHYCHANTVCVNLPGLYRCDCVPGYIRVDDFSCTEHDECGSGQHNCDENAICTNTVQGHSCTCKPGYVGNGTICRAFCEEGCRYGGTCVAPNKCVCPSGFTGSHCEKDIDECSEGIIECHNHSRCVNLPGWYHCECRSGFHDDGTYSLSGESCIDIDECALRTHTCWNDSACINLAGGFDCLCPSGPSCSGDCPHEGGLKHNGQVWTLKEDRCSVCSCKDGKIFCRRTACDCQNPSADLFCCPECDTRVTSQCLDQNGHKLYRSGDNWTHSCQQCRCLEGEVDCWPLTCPNLSCEYTAILEGECCPRCVSDPCLADNITYDIRKTCLDSYGVSRLSGSVWTMAGSPCTTCKCKNGRVCCSVDFECLQNN.

The N-terminal stretch at 1–21 (MPMDLILVVWFCVCTARTVVG) is a signal peptide. N-linked (GlcNAc...) asparagine glycosylation is found at N40, N53, N83, N224, N294, and N372. The 164-residue stretch at 64–227 (EREIHAAPHV…TQCPNLNHTC (164 aa)) folds into the Laminin G-like domain. The 62-residue stretch at 271 to 332 (KTCQVSGLLY…IAGQCCKVCR (62 aa)) folds into the VWFC 1 domain. 3 disulfide bridges follow: C395/C407, C401/C416, and C418/C432. 3 residues coordinate Ca(2+): D434, I435, and E437. One can recognise an EGF-like 1; calcium-binding domain in the interval 434–475 (DIDECAAKMHYCHANTVCVNLPGLYRCDCVPGYIRVDDFSCT). 15 cysteine pairs are disulfide-bonded: C438/C451, C445/C460, C462/C474, C480/C493, C487/C502, C504/C515, C519/C529, C523/C535, C537/C546, C553/C566, C560/C575, C577/C594, C600/C613, C607/C622, and C624/C630. Ca(2+)-binding residues include N453, L454, and L457. The EGF-like 2; calcium-binding domain maps to 476–516 (EHDECGSGQHNCDENAICTNTVQGHSCTCKPGYVGNGTICR). A glycan (N-linked (GlcNAc...) asparagine) is linked at N511. An EGF-like 3 domain is found at 517–547 (AFCEEGCRYGGTCVAPNKCVCPSGFTGSHCE). The EGF-like 4; calcium-binding domain maps to 549-587 (DIDECSEGIIECHNHSRCVNLPGWYHCECRSGFHDDGTY). Residue N562 is glycosylated (N-linked (GlcNAc...) asparagine). The 36-residue stretch at 596-631 (DIDECALRTHTCWNDSACINLAGGFDCLCPSGPSCS) folds into the EGF-like 5; calcium-binding domain. N609 carries N-linked (GlcNAc...) asparagine glycosylation. The 59-residue stretch at 692-750 (SQCLDQNGHKLYRSGDNWTHSCQQCRCLEGEVDCWPLTCPNLSCEYTAILEGECCPRCV) folds into the VWFC 2 domain. Residues N708, N732, and N758 are each glycosylated (N-linked (GlcNAc...) asparagine).

In terms of assembly, homotrimer. Binds to PKC beta-1. Interacts with ATRAID; the interaction promotes osteoblast cell differentiation and mineralization. Interacts with ROBO3.

Its subcellular location is the cytoplasm. The protein resides in the nucleus envelope. It localises to the secreted. Its function is as follows. Plays a role in the control of cell growth and differentiation. Promotes osteoblast cell differentiation and terminal mineralization. This chain is Protein kinase C-binding protein NELL1 (NELL1), found in Homo sapiens (Human).